The sequence spans 103 residues: Protein translation factor SUI1 homolog (103 aa).

The protein belongs to the SUI1 family.

In Hyperthermus butylicus (strain DSM 5456 / JCM 9403 / PLM1-5), this protein is Protein translation factor SUI1 homolog.